A 447-amino-acid polypeptide reads, in one-letter code: Probable 3-deoxy-D-manno-octulosonic acid transferase, mitochondrial (447 aa).

A mitochondrion-targeting transit peptide spans 1 to 32 (MKLGVFVYRLYRALTYGVSPLIHLHIRWRRLR). Glu-66 serves as the catalytic Proton acceptor. Residues 278–279 (PR), 320–322 (LGE), and 347–350 (NLSE) contribute to the CMP site.

It belongs to the glycosyltransferase group 1 family. Glycosyltransferase 30 subfamily. As to expression, expressed in leaves, stems and flowers.

It localises to the mitochondrion. It catalyses the reaction lipid IVA (E. coli) + CMP-3-deoxy-beta-D-manno-octulosonate = alpha-Kdo-(2-&gt;6)-lipid IVA (E. coli) + CMP + H(+). The catalysed reaction is alpha-Kdo-(2-&gt;6)-lipid IVA (E. coli) + CMP-3-deoxy-beta-D-manno-octulosonate = alpha-Kdo-(2-&gt;4)-alpha-Kdo-(2-&gt;6)-lipid IVA (E. coli) + CMP + H(+). Its pathway is glycolipid biosynthesis; KDO(2)-lipid A biosynthesis; KDO(2)-lipid A from CMP-3-deoxy-D-manno-octulosonate and lipid IV(A): step 1/4. The protein operates within glycolipid biosynthesis; KDO(2)-lipid A biosynthesis; KDO(2)-lipid A from CMP-3-deoxy-D-manno-octulosonate and lipid IV(A): step 2/4. Its function is as follows. Involved in the biosynthesis of lipid A, a phosphorylated glycolipid that in bacteria anchors the lipopolysaccharide to the outer membrane of the cell. Catalyzes the transfer of two 3-deoxy-D-manno-octulosonate (Kdo) residues from CMP-Kdo to lipid IV(A), the tetraacyldisaccharide-1,4'-bisphosphate precursor of lipid A. Lipid A-like molecules in plants may serve as structural components of the outer membranes of mitochondria and/or chloroplasts, or may be involved in signal transduction or plant defense responses. In Arabidopsis thaliana (Mouse-ear cress), this protein is Probable 3-deoxy-D-manno-octulosonic acid transferase, mitochondrial (KDTA).